The sequence spans 464 residues: MSLHFLYYCSEPTLDVKIAFCQGFDKHVDVSSIAKHYNMSKSKVDNQFYSVEVGDSTFTVLKRYQNLKPIGSGAQGIVCAAYDAVLDRNVAIKKLSRPFQNQTHAKRAYRELVLMKCVNHKNIISLLNVFTPQKTLEEFQDVYLVMELMDANLCQVIQMELDHERMSYLLYQMLCGIKHLHSAGIIHRDLKPSNIVVKSDCTLKILDFGLARTAGTSFMMTPYVVTRYYRAPEVILGMGYKENVDIWSVGCIMGEMVRHKILFPGRSYIDQWNKVIEQLGTPCPEFMKKLQPTVRNYVENRPKYAGLTFPKLFPDSLFPADSEHNKLKASQARDLLSKMLVIDPVKRISVDDALQHPYINVWYDPAEVEAPPPQIYDKQLDEREHTIEEWKELIYKEVMNSEEKTKNGVVKSQPSPSGAAVNSSESLPPSSAVNDISSMSTDQTLASDTDSSLEASAGPLGCCR.

The 296-residue stretch at Tyr-64–Ile-359 folds into the Protein kinase domain. ATP-binding positions include Ile-70–Val-78 and Lys-93. Asp-189 (proton acceptor) is an active-site residue. At Thr-221 the chain carries Phosphothreonine; by MAP2K7. The TXY signature appears at Thr-221–Tyr-223. Tyr-223 carries the phosphotyrosine; by MAP2K4 modification. The disordered stretch occupies residues Thr-405–Arg-464. The span at Val-410–Glu-454 shows a compositional bias: polar residues. S-palmitoyl cysteine attachment occurs at residues Cys-462 and Cys-463.

This sequence belongs to the protein kinase superfamily. CMGC Ser/Thr protein kinase family. MAP kinase subfamily. In terms of assembly, interacts with MAPK8IP1/JIP-1, MAPK8IP3/JIP-3/JSAP1 and SPAG9/MAPK8IP4/JIP4. Interacts with HDAC9 and MAPKBP1. Interacts with ARRB2; the interaction enhances MAPK10 activation by MAP3K5. Interacts with SARM1. Interacts with JUND; interaction is inhibited in the presence of MEN1. It depends on Mg(2+) as a cofactor. In terms of processing, dually phosphorylated on Thr-221 and Tyr-223 by MAP2K4 and MAP2K7, which activates the enzyme. MAP2K7 shows a strong preference for Thr-221 while MAP2K4 phosphorylates Tyr-223 preferentially. Weakly autophosphorylated on threonine and tyrosine residues in vitro. Palmitoylation regulates subcellular location and axonal development. In terms of tissue distribution, brain (at protein level). Expressed specifically in neurons of the hippocampus, cortex, cerebellum, brainstem, and spinal cord. Seems to be also found in testis, and very weakly in the heart.

It is found in the cytoplasm. It localises to the membrane. The protein localises to the nucleus. Its subcellular location is the mitochondrion. It catalyses the reaction L-seryl-[protein] + ATP = O-phospho-L-seryl-[protein] + ADP + H(+). The enzyme catalyses L-threonyl-[protein] + ATP = O-phospho-L-threonyl-[protein] + ADP + H(+). Its activity is regulated as follows. Activated by threonine and tyrosine phosphorylation by two dual specificity kinases, MAP2K4 and MAP2K7. MAP2K7 phosphorylates MAPK10 on Thr-221 causing a conformational change and a large increase in Vmax for the enzyme. MAP2K4 then phosphorylates Tyr-223 resulting in a further increase in Vmax. Inhibited by dual specificity phosphatases, such as DUSP1. Inhibited by HDAC9. In terms of biological role, serine/threonine-protein kinase involved in various processes such as neuronal proliferation, differentiation, migration and programmed cell death. Extracellular stimuli such as pro-inflammatory cytokines or physical stress stimulate the stress-activated protein kinase/c-Jun N-terminal kinase (SAP/JNK) signaling pathway. In this cascade, two dual specificity kinases MAP2K4/MKK4 and MAP2K7/MKK7 phosphorylate and activate MAPK10/JNK3. In turn, MAPK10/JNK3 phosphorylates a number of transcription factors, primarily components of AP-1 such as JUN and ATF2 and thus regulates AP-1 transcriptional activity. Plays regulatory roles in the signaling pathways during neuronal apoptosis. Phosphorylates the neuronal microtubule regulator STMN2. Acts in the regulation of the amyloid-beta precursor protein/APP signaling during neuronal differentiation by phosphorylating APP. Also participates in neurite growth in spiral ganglion neurons. Phosphorylates the CLOCK-BMAL1 heterodimer and plays a role in the photic regulation of the circadian clock. Phosphorylates JUND and this phosphorylation is inhibited in the presence of MEN1. This chain is Mitogen-activated protein kinase 10 (Mapk10), found in Mus musculus (Mouse).